A 305-amino-acid chain; its full sequence is DNA-directed RNA polymerase 35 kDa subunit (305 aa).

This sequence belongs to the poxviridae DNA-directed RNA polymerase 35 kDa subunit family. The DNA-dependent RNA polymerase used for intermediate and late genes expression consists of eight subunits 147 kDa, 133 kDa, 35 kDa, 30 kDa, 22 kDa, 19 kDa, 18 kDa and 7 kDa totalling more than 500 kDa in mass. The same holoenzyme, with the addition of the transcription-specificity factor RAP94, is used for early gene expression.

The protein resides in the virion. The enzyme catalyses RNA(n) + a ribonucleoside 5'-triphosphate = RNA(n+1) + diphosphate. Its function is as follows. Part of the DNA-dependent RNA polymerase which catalyzes the transcription of viral DNA into RNA using the four ribonucleoside triphosphates as substrates. Responsible for the transcription of early, intermediate and late genes. DNA-dependent RNA polymerase associates with the early transcription factor (ETF) thereby allowing the early genes transcription. Late transcription, and probably also intermediate transcription, require newly synthesized RNA polymerase. The polypeptide is DNA-directed RNA polymerase 35 kDa subunit (RPO35) (Rabbitpox virus (strain Utrecht) (RPV)).